Reading from the N-terminus, the 782-residue chain is Protein bicaudal D (782 aa).

Positions 15-77 form a coiled coil; sequence VQDLQMEVER…RHELDITQEA (63 aa). A Phosphoserine modification is found at Ser-103. Positions 107–249 form a coiled coil; sequence ETSLNLQIFD…LETLQGEREA (143 aa). 3 positions are modified to phosphoserine: Ser-285, Ser-288, and Ser-305. At Thr-306 the chain carries Phosphothreonine. Ser-310 bears the Phosphoserine mark. 2 coiled-coil regions span residues 320 to 368 and 444 to 477; these read SEIH…FMSR and TTTL…TLTH. Ser-528 carries the post-translational modification Phosphoserine. Coiled-coil stretches lie at residues 603-630 and 695-743; these read EKVN…KREQ and CEEY…MEMD. The tract at residues 699-722 is interaction with Rab6; that stretch reads VTQVDDLNRQLEAAEEEKKTLNQL. The segment at 744-782 is disordered; sequence REMRHVRRPMPAQRGTSGKSSFSTRPSSRNPASSNANPF. Over residues 757–767 the composition is skewed to polar residues; that stretch reads RGTSGKSSFST. A compositionally biased stretch (low complexity) spans 768–782; the sequence is RPSSRNPASSNANPF.

The protein belongs to the BicD family. May homodimerize but does not interact with BicDR. Interacts (via C-terminal domain) with Rab6. In terms of tissue distribution, in ovaries, expressed in oocyte and nurse cells.

The protein localises to the cytoplasm. The protein resides in the cytoskeleton. Its function is as follows. This protein is essential for differentiation. It may play a role in localizing of Nanos (a maternal determinant) activity in oocytes. Functions redundantly with BicDR. During oogenesis, plays a specific role, together with Rab6 but independently of Sec5, in the polarization of the oocyte microtubule cytoskeleton, in oskar mRNA localization and in the anterodorsal secretion of grk. Plays a role in the biogenesis of annulate lamellae containing nuclear pore complex components. During macrochaetae development, together with BicDR, involved in Rab 6 and Spn-F stability and distribution and actin cytoskeleton organization. The chain is Protein bicaudal D from Drosophila melanogaster (Fruit fly).